We begin with the raw amino-acid sequence, 425 residues long: tRNA(Ile)-lysidine synthase (425 aa).

27-32 is a binding site for ATP; that stretch reads SGGLDS.

The protein belongs to the tRNA(Ile)-lysidine synthase family.

The protein localises to the cytoplasm. The enzyme catalyses cytidine(34) in tRNA(Ile2) + L-lysine + ATP = lysidine(34) in tRNA(Ile2) + AMP + diphosphate + H(+). Its function is as follows. Ligates lysine onto the cytidine present at position 34 of the AUA codon-specific tRNA(Ile) that contains the anticodon CAU, in an ATP-dependent manner. Cytidine is converted to lysidine, thus changing the amino acid specificity of the tRNA from methionine to isoleucine. The polypeptide is tRNA(Ile)-lysidine synthase (Streptococcus pneumoniae serotype 19F (strain G54)).